The sequence spans 21 residues: Large ribosomal subunit protein uL29 (21 aa).

This sequence belongs to the universal ribosomal protein uL29 family.

This Brevundimonas diminuta (Pseudomonas diminuta) protein is Large ribosomal subunit protein uL29 (rpmC).